The following is a 103-amino-acid chain: Putative double-stranded DNA mimic protein APJL_1366 (103 aa).

It belongs to the putative dsDNA mimic protein family.

Its function is as follows. May act as a double-stranded DNA (dsDNA) mimic. Probably regulates the activity of a dsDNA-binding protein. This is Putative double-stranded DNA mimic protein APJL_1366 from Actinobacillus pleuropneumoniae serotype 3 (strain JL03).